A 130-amino-acid chain; its full sequence is Nascent polypeptide-associated complex protein (130 aa).

The region spanning 6–74 (GMNPRKMQQM…PVERDAADAI (69 aa)) is the NAC-A/B domain. The interval 65 to 91 (PVERDAADAIEAAPADDSDDTDDDDAI) is disordered. Over residues 78–90 (PADDSDDTDDDDA) the composition is skewed to acidic residues.

This sequence belongs to the NAC-alpha family. Homodimer. Interacts with the ribosome. Binds ribosomal RNA.

In terms of biological role, contacts the emerging nascent chain on the ribosome. This chain is Nascent polypeptide-associated complex protein, found in Halobacterium salinarum (strain ATCC 700922 / JCM 11081 / NRC-1) (Halobacterium halobium).